Consider the following 424-residue polypeptide: Elongation factor 1-alpha (424 aa).

Residues Lys-5–Val-223 enclose the tr-type G domain. The interval Gly-14–Ser-21 is G1. Position 14–21 (Gly-14–Ser-21) interacts with GTP. Ser-21 is a Mg(2+) binding site. Residues Gly-70–Asp-74 are G2. The tract at residues Asp-91–Gly-94 is G3. Residues Asp-91–His-95 and Asn-148–Asp-151 each bind GTP. Positions Asn-148–Asp-151 are G4. The G5 stretch occupies residues Ser-187–Tyr-189.

This sequence belongs to the TRAFAC class translation factor GTPase superfamily. Classic translation factor GTPase family. EF-Tu/EF-1A subfamily.

The protein resides in the cytoplasm. The catalysed reaction is GTP + H2O = GDP + phosphate + H(+). Its function is as follows. GTP hydrolase that promotes the GTP-dependent binding of aminoacyl-tRNA to the A-site of ribosomes during protein biosynthesis. The protein is Elongation factor 1-alpha of Picrophilus torridus (strain ATCC 700027 / DSM 9790 / JCM 10055 / NBRC 100828 / KAW 2/3).